We begin with the raw amino-acid sequence, 185 residues long: Elongation factor P (185 aa).

It belongs to the elongation factor P family.

The protein localises to the cytoplasm. Its pathway is protein biosynthesis; polypeptide chain elongation. In terms of biological role, involved in peptide bond synthesis. Stimulates efficient translation and peptide-bond synthesis on native or reconstituted 70S ribosomes in vitro. Probably functions indirectly by altering the affinity of the ribosome for aminoacyl-tRNA, thus increasing their reactivity as acceptors for peptidyl transferase. The sequence is that of Elongation factor P from Burkholderia mallei (strain NCTC 10247).